The sequence spans 328 residues: GATA transcription factor 17 (328 aa).

The disordered stretch occupies residues 1–68 (MSGHHEAKPY…EEYEGGEGVP (68 aa)). Residues 14 to 29 (RGPAPADEEAAPAAAA) are compositionally biased toward low complexity. Composition is skewed to acidic residues over residues 30 to 39 (DEAEAEAEVE) and 47 to 63 (EQEY…EYEG). One can recognise a Tify domain in the interval 100–135 (PHVASNTLTLSFQGEVYVFESVSAERVQAVLLLLGG). The 43-residue stretch at 161–203 (RMASLMRFREKRKERNFDKKIRYTVRKEVALRMQRNRGQFTSS) folds into the CCT domain. Residues 198–231 (GQFTSSKSKAEEATSVITSSEGSPNWGAVEGRPP) are disordered. A GATA-type zinc finger spans residues 236-263 (CHHCGISAASTPMMRRGPDGPRTLCNAC).

The protein belongs to the type IV zinc-finger family. Class C subfamily.

It localises to the nucleus. Transcriptional activator that specifically binds 5'-GATA-3' or 5'-GAT-3' motifs within gene promoters. This chain is GATA transcription factor 17, found in Oryza sativa subsp. japonica (Rice).